A 766-amino-acid chain; its full sequence is Ubiquitin carboxyl-terminal hydrolase creB (766 aa).

Positions 1-32 (MGSFLKSFRKDVGSAAPSVGAPPAKKEPQPLP) are disordered. Over residues 13–23 (GSAAPSVGAPP) the composition is skewed to low complexity. Residues 55–466 (YGMENFGNTC…CAYVLFYQET (412 aa)) form the USP domain. The active-site Nucleophile is the cysteine 64. Disordered regions lie at residues 115–145 (EALA…KDSP) and 243–266 (ESPQ…SRTP). A compositionally biased stretch (low complexity) spans 249 to 263 (SDVSDSVIPSSSSGS). Histidine 417 acts as the Proton acceptor in catalysis. A disordered region spans residues 526–752 (APTAPQLSTH…HDRSSHGKWR (227 aa)). Positions 548-572 (SPAPDPAPLTSLPPIPPIPETPPAP) are enriched in pro residues. A coiled-coil region spans residues 573–620 (LTSRKSDLQSKKERVKEEKERKAAEKEKEKQRRKEIETRLKDRQRRED). Composition is skewed to basic and acidic residues over residues 576 to 643 (RKSD…RNHA) and 734 to 747 (EQEH…DRSS).

It belongs to the peptidase C19 family. Interacts with creA, creC and qutD.

It carries out the reaction Thiol-dependent hydrolysis of ester, thioester, amide, peptide and isopeptide bonds formed by the C-terminal Gly of ubiquitin (a 76-residue protein attached to proteins as an intracellular targeting signal).. Its function is as follows. Ubiquitin thioesterase component of the regulatory network controlling carbon source utilization through ubiquitination and deubiquitination involving creA, creB, creC, creD and acrB. Deubiquitinates the creA catabolic repressor and the quinate permease qutD. Also plays a role in response to carbon starvation and the control of extracellular proteases activity. The protein is Ubiquitin carboxyl-terminal hydrolase creB (creB) of Emericella nidulans (strain FGSC A4 / ATCC 38163 / CBS 112.46 / NRRL 194 / M139) (Aspergillus nidulans).